Reading from the N-terminus, the 277-residue chain is MELIEKHASFGGWQNVYRHYSASLKCEMNVGVYLPPKAAGEKLPVLYWLSGLTCNEQNFITKSGVQRYAAEHNIIVVAPDTSPRGSHVADADRYDLGQGAGFYLNATQAPWNEHYKMYDYIRNELPDLVMNHFPATAKKSISGHSMGGLGALVLALRNPDEYVSVSAFSPIVSPSQVPWGQQAFAAYLGENKEAWLDYHPVSLISQGQRVAEIMVDQGLSDDFYAEQLRTQNLEKICQEMNIKTLIRYHEGYDHSYYFVSSFIGEHIAYHANKLNMR.

Active-site charge relay system residues include Ser145, Asp221, and His254.

The protein belongs to the esterase D family.

The enzyme catalyses S-formylglutathione + H2O = formate + glutathione + H(+). In terms of biological role, serine hydrolase involved in the detoxification of formaldehyde. Hydrolyzes S-formylglutathione to glutathione and formate. This chain is S-formylglutathione hydrolase FrmB (frmB), found in Escherichia coli O157:H7.